A 309-amino-acid chain; its full sequence is Serine/threonine-protein phosphatase 2A catalytic subunit beta isoform (309 aa).

Positions 57, 59, 85, and 117 each coordinate Mn(2+). Residue His118 is the Proton donor of the active site. Mn(2+)-binding residues include His167 and His241. The residue at position 307 (Tyr307) is a Phosphotyrosine. Leucine methyl ester is present on Leu309.

The protein belongs to the PPP phosphatase family. PP-1 subfamily. In terms of assembly, PP2A consists of a common heterodimeric core enzyme (composed of a 36 kDa catalytic subunit (subunit C) and a 65 kDa constant regulatory subunit (PR65) (subunit A)) that associates with a variety of regulatory subunits. Proteins that associate with the core dimer include three families of regulatory subunits B (the R2/B/PR55/B55, R3/B''/PR72/PR130/PR59 and R5/B'/B56 families), the 48 kDa variable regulatory subunit, viral proteins, and cell signaling molecules. Binds PPME1. May indirectly interact with SGO1, most probably through regulatory B56 subunits. Found in a complex with at least ARL2, PPP2CB, PPP2R1A, PPP2R2A, PPP2R5E and TBCD. Interacts with TBCD. Interacts with CTTNBP2NL. Interacts with PTPA. Part of the core of STRIPAK complexes composed of PP2A catalytic and scaffolding subunits, the striatins (PP2A regulatory subunits), the striatin-associated proteins MOB4, STRIP1 and STRIP2, PDCD10 and members of the STE20 kinases, such as STK24 and STK26. Requires Mn(2+) as cofactor. Post-translationally, reversibly methyl esterified on Leu-309 by leucine carboxyl methyltransferase 1 (LCMT1) and protein phosphatase methylesterase 1 (PPME1). Carboxyl methylation influences the affinity of the catalytic subunit for the different regulatory subunits, thereby modulating the PP2A holoenzyme's substrate specificity, enzyme activity and cellular localization. In terms of processing, phosphorylation of either threonine (by autophosphorylation-activated protein kinase) or tyrosine results in inactivation of the phosphatase. Auto-dephosphorylation has been suggested as a mechanism for reactivation. May be monoubiquitinated by NOSIP.

The protein resides in the cytoplasm. It localises to the nucleus. It is found in the chromosome. The protein localises to the centromere. Its subcellular location is the cytoskeleton. The protein resides in the spindle pole. It carries out the reaction O-phospho-L-seryl-[protein] + H2O = L-seryl-[protein] + phosphate. The catalysed reaction is O-phospho-L-threonyl-[protein] + H2O = L-threonyl-[protein] + phosphate. Its function is as follows. Catalytic subunit of protein phosphatase 2A (PP2A), a serine/threonine phosphatase involved in the regulation of a wide variety of enzymes, signal transduction pathways, and cellular events. PP2A can modulate the activity of phosphorylase B kinase, casein kinase 2, mitogen-stimulated S6 kinase, and MAP-2 kinase. Part of the striatin-interacting phosphatase and kinase (STRIPAK) complexes. STRIPAK complexes have critical roles in protein (de)phosphorylation and are regulators of multiple signaling pathways including Hippo, MAPK, nuclear receptor and cytoskeleton remodeling. Different types of STRIPAK complexes are involved in a variety of biological processes such as cell growth, differentiation, apoptosis, metabolism and immune regulation. This Bos taurus (Bovine) protein is Serine/threonine-protein phosphatase 2A catalytic subunit beta isoform (PPP2CB).